The primary structure comprises 512 residues: Protein arginine N-methyltransferase 2 (512 aa).

The segment at 67 to 103 is disordered; the sequence is TSNIDDLPLPPPIQEVEEEEPTQQNIEQQQQTQDESD. Residues 88–99 show a composition bias toward low complexity; it reads TQQNIEQQQQTQ. The 389-residue stretch at 120-508 folds into the SAM-dependent MTase PRMT-type domain; the sequence is DEEYFSSYSK…KTNPFDYSYQ (389 aa). 4 residues coordinate S-adenosyl-L-methionine: H133, R142, G166, and E217. Catalysis depends on residues E231 and E240. The segment at 375 to 395 is disordered; the sequence is DDDDNDNNNNNNDNSNDDENK.

This sequence belongs to the class I-like SAM-binding methyltransferase superfamily. Protein arginine N-methyltransferase family.

The protein localises to the cytoplasm. It localises to the nucleus. The catalysed reaction is L-arginyl-[protein] + 2 S-adenosyl-L-methionine = N(omega),N(omega)-dimethyl-L-arginyl-[protein] + 2 S-adenosyl-L-homocysteine + 2 H(+). In terms of biological role, arginine methyltransferase that methylates the guanidino nitrogens of arginyl residues in some proteins such as histones. The polypeptide is Protein arginine N-methyltransferase 2 (prmt2) (Dictyostelium discoideum (Social amoeba)).